We begin with the raw amino-acid sequence, 143 residues long: AP-4 complex subunit sigma (143 aa).

Belongs to the adaptor complexes small subunit family. As to quaternary structure, adaptor protein complex 4 (AP-4) is a heterotetramer composed of two large adaptins (epsilon-type subunit and beta-type subunit), a medium adaptin (mu-type subunit) and a small adaptin (sigma-type subunit). Interacts with EHD2.

It localises to the golgi apparatus. It is found in the trans-Golgi network. The protein resides in the membrane. The protein localises to the coated pit. In terms of biological role, subunit of novel type of clathrin- or non-clathrin-associated protein coat involved in targeting proteins from the trans-Golgi network (TGN) to the endosomal-lysosomal system. The chain is AP-4 complex subunit sigma from Arabidopsis thaliana (Mouse-ear cress).